Consider the following 261-residue polypeptide: Ethanolamine ammonia-lyase small subunit (261 aa).

Residues valine 158, glutamate 179, and cysteine 208 each coordinate adenosylcob(III)alamin.

It belongs to the EutC family. In terms of assembly, the basic unit is a heterodimer which dimerizes to form tetramers. The heterotetramers trimerize; 6 large subunits form a core ring with 6 small subunits projecting outwards. Adenosylcob(III)alamin serves as cofactor.

It localises to the bacterial microcompartment. The enzyme catalyses ethanolamine = acetaldehyde + NH4(+). The protein operates within amine and polyamine degradation; ethanolamine degradation. Catalyzes the deamination of various vicinal amino-alcohols to oxo compounds. Allows this organism to utilize ethanolamine as the sole source of nitrogen and carbon in the presence of external vitamin B12. The chain is Ethanolamine ammonia-lyase small subunit from Bradyrhizobium diazoefficiens (strain JCM 10833 / BCRC 13528 / IAM 13628 / NBRC 14792 / USDA 110).